We begin with the raw amino-acid sequence, 205 residues long: Outer-membrane lipoprotein LolB (205 aa).

Residues 1 to 17 (MFLRHCITFTLIALLAG) form the signal peptide. A lipid anchor (N-palmitoyl cysteine) is attached at Cys-18. Cys-18 carries the S-diacylglycerol cysteine lipid modification.

This sequence belongs to the LolB family. In terms of assembly, monomer.

It localises to the cell outer membrane. Plays a critical role in the incorporation of lipoproteins in the outer membrane after they are released by the LolA protein. The chain is Outer-membrane lipoprotein LolB from Pseudomonas putida (strain W619).